Here is a 317-residue protein sequence, read N- to C-terminus: Acetyl-coenzyme A carboxylase carboxyl transferase subunit alpha (317 aa).

Positions 40–293 (LEGRVRDAMV…ETVIGDALKE (254 aa)) constitute a CoA carboxyltransferase C-terminal domain.

It belongs to the AccA family. As to quaternary structure, acetyl-CoA carboxylase is a heterohexamer composed of biotin carboxyl carrier protein (AccB), biotin carboxylase (AccC) and two subunits each of ACCase subunit alpha (AccA) and ACCase subunit beta (AccD).

The protein localises to the cytoplasm. The catalysed reaction is N(6)-carboxybiotinyl-L-lysyl-[protein] + acetyl-CoA = N(6)-biotinyl-L-lysyl-[protein] + malonyl-CoA. The protein operates within lipid metabolism; malonyl-CoA biosynthesis; malonyl-CoA from acetyl-CoA: step 1/1. Its function is as follows. Component of the acetyl coenzyme A carboxylase (ACC) complex. First, biotin carboxylase catalyzes the carboxylation of biotin on its carrier protein (BCCP) and then the CO(2) group is transferred by the carboxyltransferase to acetyl-CoA to form malonyl-CoA. The chain is Acetyl-coenzyme A carboxylase carboxyl transferase subunit alpha from Rhizobium meliloti (strain 1021) (Ensifer meliloti).